The sequence spans 138 residues: ATP synthase epsilon chain (138 aa).

This sequence belongs to the ATPase epsilon chain family. F-type ATPases have 2 components, CF(1) - the catalytic core - and CF(0) - the membrane proton channel. CF(1) has five subunits: alpha(3), beta(3), gamma(1), delta(1), epsilon(1). CF(0) has three main subunits: a, b and c.

The protein resides in the cell inner membrane. Produces ATP from ADP in the presence of a proton gradient across the membrane. The polypeptide is ATP synthase epsilon chain (Cupriavidus metallidurans (strain ATCC 43123 / DSM 2839 / NBRC 102507 / CH34) (Ralstonia metallidurans)).